The chain runs to 122 residues: MAPKKDKKPKKSTWKFNLDLTHAVEDGIFDSGNFEQFLREKVKVNGKTGNLGNVVHIERFKNKIIVVSEKQFSKRYLKYLTKKYLKKNNLRDWLRVVASDKETYELRYFQISQDEDESESED.

Phosphoserine occurs at positions 112, 118, and 120.

This sequence belongs to the eukaryotic ribosomal protein eL22 family.

This chain is Ribosomal protein eL22-like (RPL22L1), found in Bos taurus (Bovine).